We begin with the raw amino-acid sequence, 258 residues long: Deoxyribose-phosphate aldolase (258 aa).

Catalysis depends on Asp-101, which acts as the Proton donor/acceptor. Lys-166 serves as the catalytic Schiff-base intermediate with acetaldehyde. The active-site Proton donor/acceptor is the Lys-200.

The protein belongs to the DeoC/FbaB aldolase family. DeoC type 2 subfamily.

It is found in the cytoplasm. It carries out the reaction 2-deoxy-D-ribose 5-phosphate = D-glyceraldehyde 3-phosphate + acetaldehyde. It participates in carbohydrate degradation; 2-deoxy-D-ribose 1-phosphate degradation; D-glyceraldehyde 3-phosphate and acetaldehyde from 2-deoxy-alpha-D-ribose 1-phosphate: step 2/2. Catalyzes a reversible aldol reaction between acetaldehyde and D-glyceraldehyde 3-phosphate to generate 2-deoxy-D-ribose 5-phosphate. This chain is Deoxyribose-phosphate aldolase, found in Actinobacillus pleuropneumoniae serotype 5b (strain L20).